A 307-amino-acid polypeptide reads, in one-letter code: 3-methyl-2-oxobutanoate hydroxymethyltransferase (307 aa).

Mg(2+) contacts are provided by aspartate 61 and aspartate 100. 3-methyl-2-oxobutanoate contacts are provided by residues 61-62 (DS), aspartate 100, and lysine 130. Glutamate 132 contacts Mg(2+). The Proton acceptor role is filled by glutamate 199.

This sequence belongs to the PanB family. In terms of assembly, homodecamer; pentamer of dimers. It depends on Mg(2+) as a cofactor.

The protein localises to the cytoplasm. It catalyses the reaction 3-methyl-2-oxobutanoate + (6R)-5,10-methylene-5,6,7,8-tetrahydrofolate + H2O = 2-dehydropantoate + (6S)-5,6,7,8-tetrahydrofolate. It functions in the pathway cofactor biosynthesis; (R)-pantothenate biosynthesis; (R)-pantoate from 3-methyl-2-oxobutanoate: step 1/2. Functionally, catalyzes the reversible reaction in which hydroxymethyl group from 5,10-methylenetetrahydrofolate is transferred onto alpha-ketoisovalerate to form ketopantoate. This is 3-methyl-2-oxobutanoate hydroxymethyltransferase from Nitratidesulfovibrio vulgaris (strain ATCC 29579 / DSM 644 / CCUG 34227 / NCIMB 8303 / VKM B-1760 / Hildenborough) (Desulfovibrio vulgaris).